We begin with the raw amino-acid sequence, 446 residues long: Bifunctional protein GlmU (446 aa).

The segment at 1–225 (MEGIILAAGK…ETEVYGVNDR (225 aa)) is pyrophosphorylase. Residues 6–9 (LAAG), Lys-20, Gln-70, and 75–76 (GT) each bind UDP-N-acetyl-alpha-D-glucosamine. Asp-98 serves as a coordination point for Mg(2+). Gly-135, Glu-150, Asn-165, and Asn-223 together coordinate UDP-N-acetyl-alpha-D-glucosamine. Mg(2+) is bound at residue Asn-223. A linker region spans residues 226–246 (VQLARLTKGVYRRKAEALMQE). The segment at 247–446 (GVTIIDPETV…RQVNKEDYVK (200 aa)) is N-acetyltransferase. Arg-328 and Lys-346 together coordinate UDP-N-acetyl-alpha-D-glucosamine. The active-site Proton acceptor is His-358. 2 residues coordinate UDP-N-acetyl-alpha-D-glucosamine: Tyr-361 and Asn-372. Acetyl-CoA is bound by residues Ala-375, 381–382 (NY), Ser-400, Ala-418, and Arg-435.

In the N-terminal section; belongs to the N-acetylglucosamine-1-phosphate uridyltransferase family. It in the C-terminal section; belongs to the transferase hexapeptide repeat family. In terms of assembly, homotrimer. Requires Mg(2+) as cofactor.

It is found in the cytoplasm. It catalyses the reaction alpha-D-glucosamine 1-phosphate + acetyl-CoA = N-acetyl-alpha-D-glucosamine 1-phosphate + CoA + H(+). The catalysed reaction is N-acetyl-alpha-D-glucosamine 1-phosphate + UTP + H(+) = UDP-N-acetyl-alpha-D-glucosamine + diphosphate. Its pathway is nucleotide-sugar biosynthesis; UDP-N-acetyl-alpha-D-glucosamine biosynthesis; N-acetyl-alpha-D-glucosamine 1-phosphate from alpha-D-glucosamine 6-phosphate (route II): step 2/2. The protein operates within nucleotide-sugar biosynthesis; UDP-N-acetyl-alpha-D-glucosamine biosynthesis; UDP-N-acetyl-alpha-D-glucosamine from N-acetyl-alpha-D-glucosamine 1-phosphate: step 1/1. It functions in the pathway bacterial outer membrane biogenesis; LPS lipid A biosynthesis. Functionally, catalyzes the last two sequential reactions in the de novo biosynthetic pathway for UDP-N-acetylglucosamine (UDP-GlcNAc). The C-terminal domain catalyzes the transfer of acetyl group from acetyl coenzyme A to glucosamine-1-phosphate (GlcN-1-P) to produce N-acetylglucosamine-1-phosphate (GlcNAc-1-P), which is converted into UDP-GlcNAc by the transfer of uridine 5-monophosphate (from uridine 5-triphosphate), a reaction catalyzed by the N-terminal domain. The sequence is that of Bifunctional protein GlmU from Carboxydothermus hydrogenoformans (strain ATCC BAA-161 / DSM 6008 / Z-2901).